A 196-amino-acid polypeptide reads, in one-letter code: Endonuclease V (196 aa).

Mg(2+)-binding residues include Asp-37 and Asp-98.

Belongs to the endonuclease V family. Mg(2+) is required as a cofactor.

The protein localises to the cytoplasm. It catalyses the reaction Endonucleolytic cleavage at apurinic or apyrimidinic sites to products with a 5'-phosphate.. Its function is as follows. DNA repair enzyme involved in the repair of deaminated bases. Selectively cleaves double-stranded DNA at the second phosphodiester bond 3' to a deoxyinosine leaving behind the intact lesion on the nicked DNA. This chain is Endonuclease V, found in Sulfolobus acidocaldarius (strain ATCC 33909 / DSM 639 / JCM 8929 / NBRC 15157 / NCIMB 11770).